The following is a 318-amino-acid chain: Methionyl-tRNA formyltransferase (318 aa).

112 to 115 (SILP) lines the (6S)-5,6,7,8-tetrahydrofolate pocket.

This sequence belongs to the Fmt family.

It carries out the reaction L-methionyl-tRNA(fMet) + (6R)-10-formyltetrahydrofolate = N-formyl-L-methionyl-tRNA(fMet) + (6S)-5,6,7,8-tetrahydrofolate + H(+). In terms of biological role, attaches a formyl group to the free amino group of methionyl-tRNA(fMet). The formyl group appears to play a dual role in the initiator identity of N-formylmethionyl-tRNA by promoting its recognition by IF2 and preventing the misappropriation of this tRNA by the elongation apparatus. This chain is Methionyl-tRNA formyltransferase, found in Shewanella baltica (strain OS223).